Consider the following 198-residue polypeptide: Probable GTP-binding protein EngB (198 aa).

Positions 22–196 constitute an EngB-type G domain; it reads NLSEIAFVGR…WNWIKGQAEL (175 aa). GTP-binding positions include 30 to 37, 57 to 61, 75 to 78, 142 to 145, and 175 to 177; these read GRSNVGKS, GKTQT, DVPG, TKAD, and FSA. Residues serine 37 and threonine 59 each coordinate Mg(2+).

This sequence belongs to the TRAFAC class TrmE-Era-EngA-EngB-Septin-like GTPase superfamily. EngB GTPase family. Requires Mg(2+) as cofactor.

Necessary for normal cell division and for the maintenance of normal septation. The protein is Probable GTP-binding protein EngB of Oenococcus oeni (strain ATCC BAA-331 / PSU-1).